Here is a 716-residue protein sequence, read N- to C-terminus: Translation initiation factor IF-2 (716 aa).

The interval 50–136 is disordered; the sequence is YKKGGARAKS…VKPKKELPEK (87 aa). The segment covering 62 to 84 has biased composition (polar residues); that stretch reads PAETNKNKQPQGVNQQSAGNQPN. A compositionally biased stretch (basic residues) spans 101–113; it reads KNKKNNNNKKNKR. The span at 114–126 shows a compositional bias: low complexity; sequence NNNNNKNQHQQKP. The tr-type G domain maps to 217-386; it reads IRPPVVTIMG…LLVSEVEELK (170 aa). The G1 stretch occupies residues 226 to 233; sequence GHVDHGKT. 226 to 233 contacts GTP; sequence GHVDHGKT. Residues 251–255 are G2; sequence GITQH. Positions 272-275 are G3; that stretch reads DTPG. GTP is bound by residues 272-276 and 326-329; these read DTPGH and NKID. A G4 region spans residues 326–329; sequence NKID. The tract at residues 362-364 is G5; the sequence is SAL.

This sequence belongs to the TRAFAC class translation factor GTPase superfamily. Classic translation factor GTPase family. IF-2 subfamily.

Its subcellular location is the cytoplasm. Functionally, one of the essential components for the initiation of protein synthesis. Protects formylmethionyl-tRNA from spontaneous hydrolysis and promotes its binding to the 30S ribosomal subunits. Also involved in the hydrolysis of GTP during the formation of the 70S ribosomal complex. The polypeptide is Translation initiation factor IF-2 (infB) (Bacillus subtilis (strain 168)).